Here is a 424-residue protein sequence, read N- to C-terminus: Anaerobic glycerol-3-phosphate dehydrogenase subunit B (424 aa).

This sequence belongs to the anaerobic G-3-P dehydrogenase subunit B family. In terms of assembly, composed of a catalytic GlpA/B dimer and of membrane bound GlpC. FMN serves as cofactor.

It catalyses the reaction a quinone + sn-glycerol 3-phosphate = dihydroxyacetone phosphate + a quinol. It functions in the pathway polyol metabolism; glycerol degradation via glycerol kinase pathway; glycerone phosphate from sn-glycerol 3-phosphate (anaerobic route): step 1/1. Functionally, conversion of glycerol 3-phosphate to dihydroxyacetone. Uses fumarate or nitrate as electron acceptor. The chain is Anaerobic glycerol-3-phosphate dehydrogenase subunit B from Yersinia pestis bv. Antiqua (strain Antiqua).